The sequence spans 1205 residues: Transcriptional-regulating factor 1 (1205 aa).

Disordered stretches follow at residues 201-226, 270-317, 332-351, 390-500, 527-583, and 601-629; these read YQQV…VGQH, YPQP…QRQS, QHLQ…SYHR, PQSH…QTKG, LNGH…PEAE, and PKPS…MSDD. Composition is skewed to low complexity over residues 291–317 and 332–342; these read QQQQ…QRQS and QHLQEQQQPSM. Composition is skewed to polar residues over residues 406–417, 437–447, and 487–498; these read KTYSSDRQTPAM, SEMTRVTSTLP, and QSGSPESSSGQT. S490 is subject to Phosphoserine. A C2H2-type 1 zinc finger spans residues 512–534; the sequence is LTCSICLKEFKSLPALNGHMRSH. Over residues 551–579 the composition is skewed to pro residues; it reads APPPQPQPQPQPQQPLPPPPPPPPPPQLP. A compositionally biased stretch (polar residues) spans 604 to 613; sequence SSQGFTNSVA. An N6-acetyllysine mark is found at K639 and K646. T773 carries the phosphothreonine modification. The ELM2 domain maps to 785-876; it reads PRINIGLRFQ…ATLEMLLLRK (92 aa). In terms of domain architecture, SANT spans 891-942; that stretch reads AGSDKWTSLERKLFNKALATYSKDFIFVQKMVKSKTVAQCVEYYYTWKKIMR. Residues 956-975 are compositionally biased toward acidic residues; sequence DDCMTSEEEEEAEEEEEDPE. Disordered regions lie at residues 956–1016 and 1043–1087; these read DDCM…QQPS and HGGT…GETD. Position 960 is a phosphothreonine (T960). S961 is subject to Phosphoserine. The span at 976-990 shows a compositional bias: basic and acidic residues; it reads EDRKSIKEEESEVAK. Residues 1019–1043 form a C2H2-type 2 zinc finger; that stretch reads FICEMPNCGAVFSSRQALNGHARIH. Residues 1072 to 1086 are compositionally biased toward low complexity; sequence SVKSSPSHSTTSGET. The C2H2-type 3 zinc finger occupies 1092-1114; the sequence is FPCKECGKVFFKIKSRNAHMKTH.

As to quaternary structure, interacts with CREBBP and EP300. Interacts with DNTTIP1 and DNTT. Highly expressed in kidney, lung and brain. In the brain, expression was seen in the basal ganglia, hippocampus, piriform cortex, cerebral cortex, ventromedial nucleus of the hypothalamus and the dorsal and superior central nuclei of the raphe.

It is found in the nucleus. Binds DNA and activates transcription of CYP11A1. Interaction with CREBBP and EP300 results in a synergistic transcriptional activation of CYP11A1. This Mus musculus (Mouse) protein is Transcriptional-regulating factor 1 (Trerf1).